We begin with the raw amino-acid sequence, 130 residues long: Large ribosomal subunit protein bL31c (130 aa).

Residues 1–36 (MVLTLSNQFLAKIPATPKTLTLPKTSSSTLRPQWSC) constitute a chloroplast transit peptide.

Belongs to the bacterial ribosomal protein bL31 family. Type A subfamily. In terms of assembly, component of the chloroplast large ribosomal subunit (LSU). Mature 70S chloroplast ribosomes of higher plants consist of a small (30S) and a large (50S) subunit. The 30S small subunit contains 1 molecule of ribosomal RNA (16S rRNA) and 24 different proteins. The 50S large subunit contains 3 rRNA molecules (23S, 5S and 4.5S rRNA) and 33 different proteins.

It is found in the plastid. Its subcellular location is the chloroplast. Functionally, component of the chloroplast ribosome (chloro-ribosome), a dedicated translation machinery responsible for the synthesis of chloroplast genome-encoded proteins, including proteins of the transcription and translation machinery and components of the photosynthetic apparatus. The chain is Large ribosomal subunit protein bL31c (RPL31) from Spinacia oleracea (Spinach).